Here is a 112-residue protein sequence, read N- to C-terminus: Probable small nuclear ribonucleoprotein Sm D2 (112 aa).

Over residues 1–15 (MSRMNDETMEDKPDD) the composition is skewed to basic and acidic residues. The disordered stretch occupies residues 1–23 (MSRMNDETMEDKPDDSNGPLSIL). The Sm domain occupies 20–106 (LSILMDSVNN…VILVLKNPLG (87 aa)).

Belongs to the snRNP core protein family.

The protein localises to the nucleus. It localises to the cytoplasm. The protein resides in the cytosol. Its function is as follows. Plays a role in pre-mRNA splicing as a core component of the spliceosomal U1, U2, U4 and U5 small nuclear ribonucleoproteins (snRNPs), the building blocks of the spliceosome. The chain is Probable small nuclear ribonucleoprotein Sm D2 (snrpd2) from Dictyostelium discoideum (Social amoeba).